A 130-amino-acid polypeptide reads, in one-letter code: Insulin-like growth factor 1 (130 aa).

A signal peptide spans 1–25 (MHAVSSSHLFYLAFCLLVLTSSATA). The segment at 26-54 (GPETLCGAELVDALQFVCGDRGFYFNKPT) is b. 3 disulfides stabilise this stretch: Cys-31-Cys-73, Cys-43-Cys-86, and Cys-72-Cys-77. The interval 55–66 (GYGSSSRRAPQT) is c. The a stretch occupies residues 67 to 87 (GIVDECCFRSCDLRRLEMYCA). The interval 88 to 95 (PLKPAKSA) is d. A propeptide spans 96 to 130 (RSVRAQRHTDMPKTQKEVHLKNASRGSAGNKNYRM) (e peptide). A disordered region spans residues 97-130 (SVRAQRHTDMPKTQKEVHLKNASRGSAGNKNYRM). The span at 102–115 (RHTDMPKTQKEVHL) shows a compositional bias: basic and acidic residues. A compositionally biased stretch (polar residues) spans 119–130 (SRGSAGNKNYRM).

Belongs to the insulin family. In terms of assembly, forms a ternary complex with IGFR1 and ITGAV:ITGB3. Forms a ternary complex with IGFR1 and ITGA6:ITGB4. Forms a ternary complex with IGFBP3 and ALS.

The protein resides in the secreted. In terms of biological role, the insulin-like growth factors, isolated from plasma, are structurally and functionally related to insulin but have a much higher growth-promoting activity. May be a physiological regulator of [1-14C]-2-deoxy-D-glucose (2DG) transport and glycogen synthesis in osteoblasts. Stimulates glucose transport in bone-derived osteoblastic (PyMS) cells and is effective at much lower concentrations than insulin, not only regarding glycogen and DNA synthesis but also with regard to enhancing glucose uptake. May play a role in synapse maturation. Ca(2+)-dependent exocytosis of IGF1 is required for sensory perception of smell in the olfactory bulb. Acts as a ligand for IGF1R. Binds to the alpha subunit of IGF1R, leading to the activation of the intrinsic tyrosine kinase activity which autophosphorylates tyrosine residues in the beta subunit thus initiating a cascade of down-stream signaling events leading to activation of the PI3K-AKT/PKB and the Ras-MAPK pathways. Binds to integrins ITGAV:ITGB3 and ITGA6:ITGB4. Its binding to integrins and subsequent ternary complex formation with integrins and IGFR1 are essential for IGF1 signaling. Induces the phosphorylation and activation of IGFR1, MAPK3/ERK1, MAPK1/ERK2 and AKT1. As part of the MAPK/ERK signaling pathway, acts as a negative regulator of apoptosis in cardiomyocytes via promotion of STUB1/CHIP-mediated ubiquitination and degradation of ICER-type isoforms of CREM. The polypeptide is Insulin-like growth factor 1 (Cavia porcellus (Guinea pig)).